Reading from the N-terminus, the 360-residue chain is Phospho-N-acetylmuramoyl-pentapeptide-transferase (360 aa).

Transmembrane regions (helical) follow at residues 25–45 (RGIL…PWMI), 73–93 (TMGG…WADL), 97–117 (YVWV…VDDY), 134–154 (YFWQ…TAPT), 168–188 (VTIP…VGSS), 199–219 (GLAI…CYLS), 236–256 (SGEL…FLWF), 263–283 (VFMG…IAVI), 288–308 (IVLF…VIQV), and 338–358 (VIVR…ATLK).

Belongs to the glycosyltransferase 4 family. MraY subfamily. The cofactor is Mg(2+).

Its subcellular location is the cell inner membrane. The enzyme catalyses UDP-N-acetyl-alpha-D-muramoyl-L-alanyl-gamma-D-glutamyl-meso-2,6-diaminopimeloyl-D-alanyl-D-alanine + di-trans,octa-cis-undecaprenyl phosphate = di-trans,octa-cis-undecaprenyl diphospho-N-acetyl-alpha-D-muramoyl-L-alanyl-D-glutamyl-meso-2,6-diaminopimeloyl-D-alanyl-D-alanine + UMP. The protein operates within cell wall biogenesis; peptidoglycan biosynthesis. Catalyzes the initial step of the lipid cycle reactions in the biosynthesis of the cell wall peptidoglycan: transfers peptidoglycan precursor phospho-MurNAc-pentapeptide from UDP-MurNAc-pentapeptide onto the lipid carrier undecaprenyl phosphate, yielding undecaprenyl-pyrophosphoryl-MurNAc-pentapeptide, known as lipid I. The sequence is that of Phospho-N-acetylmuramoyl-pentapeptide-transferase from Pseudomonas putida (strain ATCC 700007 / DSM 6899 / JCM 31910 / BCRC 17059 / LMG 24140 / F1).